Reading from the N-terminus, the 255-residue chain is Segregation and condensation protein A (255 aa).

The protein belongs to the ScpA family. In terms of assembly, component of a cohesin-like complex composed of ScpA, ScpB and the Smc homodimer, in which ScpA and ScpB bind to the head domain of Smc. The presence of the three proteins is required for the association of the complex with DNA.

Its subcellular location is the cytoplasm. Its function is as follows. Participates in chromosomal partition during cell division. May act via the formation of a condensin-like complex containing Smc and ScpB that pull DNA away from mid-cell into both cell halves. This is Segregation and condensation protein A from Lactiplantibacillus plantarum (strain ATCC BAA-793 / NCIMB 8826 / WCFS1) (Lactobacillus plantarum).